A 269-amino-acid chain; its full sequence is 2-dehydro-3-deoxyphosphooctonate aldolase (269 aa).

It belongs to the KdsA family.

The protein resides in the cytoplasm. It carries out the reaction D-arabinose 5-phosphate + phosphoenolpyruvate + H2O = 3-deoxy-alpha-D-manno-2-octulosonate-8-phosphate + phosphate. The protein operates within carbohydrate biosynthesis; 3-deoxy-D-manno-octulosonate biosynthesis; 3-deoxy-D-manno-octulosonate from D-ribulose 5-phosphate: step 2/3. Its pathway is bacterial outer membrane biogenesis; lipopolysaccharide biosynthesis. The sequence is that of 2-dehydro-3-deoxyphosphooctonate aldolase from Chlamydia caviae (strain ATCC VR-813 / DSM 19441 / 03DC25 / GPIC) (Chlamydophila caviae).